The chain runs to 488 residues: MSFNNQSIDQLHDLLVKKEISATELTKATLEDIHAREQAVGSFITISDDMAIAQAKEIDDKGIDADNVMSGIPLAVKDNISTKGILTTAASKMLYNYEPIFDATAVEKLYAKDMIVIGKANMDEFAMGGSTETSYFKKTNNAWDHSKVPGGSSGGSAAAVASGQVRLSLGSDTGGSIRQPASFNGIVGMKPTYGRVSRFGLFAFGSSLDQIGPMSQTVKENAQLLTVISGHDVRDSTSSERTVGDFTAKIGQDIQGMKIALPKEYLGEGIAPGVKETIIKAAKHLEKLGAVIEEVSLPHSKYGVAVYYIIASSEASSNLQRFDGIRYGYRTENYKNLDDIYVNTRSEGFGDEVKRRIMLGTFSLSSGYYDAYYKKAGQVRSLIIQDFEKVFADYDLILGPTAPTTAFDLDSLNHDPVAMYLADILTIPVNLAGLPGISIPAGFDKGLPVGMQLIGPKFSEETIYQVAAAFEATTDYHKQQPKIFGGEN.

Residues Lys77 and Ser152 each act as charge relay system in the active site. Ser176 (acyl-ester intermediate) is an active-site residue.

It belongs to the amidase family. GatA subfamily. As to quaternary structure, heterotrimer of A, B and C subunits.

The catalysed reaction is L-glutamyl-tRNA(Gln) + L-glutamine + ATP + H2O = L-glutaminyl-tRNA(Gln) + L-glutamate + ADP + phosphate + H(+). In terms of biological role, allows the formation of correctly charged Gln-tRNA(Gln) through the transamidation of misacylated Glu-tRNA(Gln) in organisms which lack glutaminyl-tRNA synthetase. The reaction takes place in the presence of glutamine and ATP through an activated gamma-phospho-Glu-tRNA(Gln). The sequence is that of Glutamyl-tRNA(Gln) amidotransferase subunit A from Streptococcus agalactiae serotype III (strain NEM316).